A 53-amino-acid chain; its full sequence is Large ribosomal subunit protein eL40 (53 aa).

It belongs to the eukaryotic ribosomal protein eL40 family.

This chain is Large ribosomal subunit protein eL40, found in Pyrobaculum aerophilum (strain ATCC 51768 / DSM 7523 / JCM 9630 / CIP 104966 / NBRC 100827 / IM2).